Consider the following 122-residue polypeptide: UPF0482 protein Spro_2288 (122 aa).

The N-terminal stretch at M1–A31 is a signal peptide. A disordered region spans residues S46–N71.

Belongs to the UPF0482 family.

This chain is UPF0482 protein Spro_2288, found in Serratia proteamaculans (strain 568).